Reading from the N-terminus, the 246-residue chain is Probable transcriptional regulatory protein CTC_02215 (246 aa).

This sequence belongs to the TACO1 family.

The protein resides in the cytoplasm. This is Probable transcriptional regulatory protein CTC_02215 from Clostridium tetani (strain Massachusetts / E88).